The following is a 212-amino-acid chain: MDILGNIPSQYWIIVSNTFGNNTSFEFNYASLKEIYDIEIDYFNYVINHLVKETYDSGKILTTLKMLEQIYIKLYDYTKLNLYQESIDYVYIEIQRWFKMNSHDGNFSLETKQMELLKYIYGREQCKYAHELVEQAYVHLSNENGNNGLVASWITYANSYFGGFYKKNAFEIISEIHESQKNNIVNKLKQITVDEVKPLDEVYKKWMSLKIY.

The protein belongs to the mimivirus R683/R861 family.

This is an uncharacterized protein from Acanthamoeba polyphaga (Amoeba).